Reading from the N-terminus, the 390-residue chain is 1-deoxy-D-xylulose 5-phosphate reductoisomerase (390 aa).

Threonine 10, glycine 11, serine 12, isoleucine 13, glycine 36, arginine 37, asparagine 38, and asparagine 121 together coordinate NADPH. Residue lysine 122 participates in 1-deoxy-D-xylulose 5-phosphate binding. Residue glutamate 123 coordinates NADPH. Aspartate 147 contacts Mn(2+). Residues serine 148, glutamate 149, serine 173, and histidine 196 each contribute to the 1-deoxy-D-xylulose 5-phosphate site. Glutamate 149 lines the Mn(2+) pocket. Glycine 202 provides a ligand contact to NADPH. 4 residues coordinate 1-deoxy-D-xylulose 5-phosphate: serine 209, asparagine 214, lysine 215, and glutamate 218. Glutamate 218 is a binding site for Mn(2+). Residues 367–390 (AASEHGRREAEKRVGARAHAPASR) are disordered. Over residues 370 to 380 (EHGRREAEKRV) the composition is skewed to basic and acidic residues.

This sequence belongs to the DXR family. It depends on Mg(2+) as a cofactor. Mn(2+) serves as cofactor.

The catalysed reaction is 2-C-methyl-D-erythritol 4-phosphate + NADP(+) = 1-deoxy-D-xylulose 5-phosphate + NADPH + H(+). It participates in isoprenoid biosynthesis; isopentenyl diphosphate biosynthesis via DXP pathway; isopentenyl diphosphate from 1-deoxy-D-xylulose 5-phosphate: step 1/6. Catalyzes the NADPH-dependent rearrangement and reduction of 1-deoxy-D-xylulose-5-phosphate (DXP) to 2-C-methyl-D-erythritol 4-phosphate (MEP). In Anaeromyxobacter dehalogenans (strain 2CP-1 / ATCC BAA-258), this protein is 1-deoxy-D-xylulose 5-phosphate reductoisomerase.